A 621-amino-acid polypeptide reads, in one-letter code: Solute carrier family 2, facilitated glucose transporter member 12 (621 aa).

Topologically, residues methionine 1–serine 48 are cytoplasmic. A helical membrane pass occupies residues valine 49–leucine 69. Residues leucine 70–glutamate 84 lie on the Extracellular side of the membrane. The chain crosses the membrane as a helical span at residues methionine 85–isoleucine 105. Residues aspartate 106–cysteine 119 lie on the Cytoplasmic side of the membrane. A helical transmembrane segment spans residues leucine 120 to glycine 140. Arginine 141 is a topological domain (extracellular). A helical transmembrane segment spans residues isoleucine 142 to isoleucine 162. Over alanine 163–glutamate 176 the chain is Cytoplasmic. The chain crosses the membrane as a helical span at residues leucine 177–phenylalanine 197. Topologically, residues histidine 198–lysine 201 are extracellular. Residues tyrosine 202 to proline 222 form a helical membrane-spanning segment. The Cytoplasmic portion of the chain corresponds to proline 223–arginine 282. A helical membrane pass occupies residues isoleucine 283–phenylalanine 303. The Extracellular segment spans residues tyrosine 304–serine 321. A helical transmembrane segment spans residues leucine 322–valine 342. Topologically, residues aspartate 343–threonine 349 are cytoplasmic. Residues phenylalanine 350–leucine 370 traverse the membrane as a helical segment. Topologically, residues asparagine 371–alanine 470 are extracellular. N-linked (GlcNAc...) asparagine glycosylation is found at asparagine 375, asparagine 387, asparagine 400, and asparagine 405. Residues serine 471–leucine 491 form a helical membrane-spanning segment. The Cytoplasmic portion of the chain corresponds to serine 492–arginine 502. Residues alanine 503–leucine 523 traverse the membrane as a helical segment. Residues threonine 524 to proline 532 lie on the Extracellular side of the membrane. A helical transmembrane segment spans residues tryptophan 533 to isoleucine 553. The Cytoplasmic segment spans residues proline 554 to asparagine 621.

The protein belongs to the major facilitator superfamily. Sugar transporter (TC 2.A.1.1) family. Glucose transporter subfamily.

It localises to the cell membrane. The protein resides in the endomembrane system. It is found in the cytoplasm. Its subcellular location is the perinuclear region. It catalyses the reaction D-glucose(out) = D-glucose(in). In terms of biological role, insulin-independent facilitative glucose transporter. In Macaca fascicularis (Crab-eating macaque), this protein is Solute carrier family 2, facilitated glucose transporter member 12.